We begin with the raw amino-acid sequence, 318 residues long: ATP synthase gamma chain (318 aa).

The protein belongs to the ATPase gamma chain family. F-type ATPases have 2 components, CF(1) - the catalytic core - and CF(0) - the membrane proton channel. CF(1) has five subunits: alpha(3), beta(3), gamma(1), delta(1), epsilon(1). CF(0) has three main subunits: a, b and c.

It localises to the cell membrane. In terms of biological role, produces ATP from ADP in the presence of a proton gradient across the membrane. The gamma chain is believed to be important in regulating ATPase activity and the flow of protons through the CF(0) complex. In Lactobacillus gasseri (strain ATCC 33323 / DSM 20243 / BCRC 14619 / CIP 102991 / JCM 1131 / KCTC 3163 / NCIMB 11718 / NCTC 13722 / AM63), this protein is ATP synthase gamma chain.